The sequence spans 444 residues: Tubulin beta-7 chain (444 aa).

The GTP site is built by Q11, E69, S138, G142, T143, G144, N204, and N226. Residue E69 coordinates Mg(2+).

It belongs to the tubulin family. Dimer of alpha and beta chains. A typical microtubule is a hollow water-filled tube with an outer diameter of 25 nm and an inner diameter of 15 nM. Alpha-beta heterodimers associate head-to-tail to form protofilaments running lengthwise along the microtubule wall with the beta-tubulin subunit facing the microtubule plus end conferring a structural polarity. Microtubules usually have 13 protofilaments but different protofilament numbers can be found in some organisms and specialized cells. Mg(2+) is required as a cofactor.

It is found in the cytoplasm. It localises to the cytoskeleton. In terms of biological role, tubulin is the major constituent of microtubules, a cylinder consisting of laterally associated linear protofilaments composed of alpha- and beta-tubulin heterodimers. Microtubules grow by the addition of GTP-tubulin dimers to the microtubule end, where a stabilizing cap forms. Below the cap, tubulin dimers are in GDP-bound state, owing to GTPase activity of alpha-tubulin. This chain is Tubulin beta-7 chain, found in Gossypium hirsutum (Upland cotton).